The chain runs to 122 residues: Large ribosomal subunit protein uL14 (122 aa).

It belongs to the universal ribosomal protein uL14 family. In terms of assembly, part of the 50S ribosomal subunit. Forms a cluster with proteins L3 and L19. In the 70S ribosome, L14 and L19 interact and together make contacts with the 16S rRNA in bridges B5 and B8.

Binds to 23S rRNA. Forms part of two intersubunit bridges in the 70S ribosome. This is Large ribosomal subunit protein uL14 from Oleidesulfovibrio alaskensis (strain ATCC BAA-1058 / DSM 17464 / G20) (Desulfovibrio alaskensis).